The sequence spans 551 residues: Chloride channel CLIC-like protein 1 (551 aa).

The first 18 residues, 1–18 (MLCSLLLCECLLLVAGYA), serve as a signal peptide directing secretion. Over 19-184 (HDDDWIDPTD…EDSFGVDPYN (166 aa)) the chain is Lumenal. Residues 185-205 (VLMVLLCLLCIVVLVATELWT) traverse the membrane as a helical segment. Residues 206–216 (YVRWYTQLRRV) lie on the Cytoplasmic side of the membrane. Residues 217–237 (LIISFLFSLGWNWMYLYKLAF) form a helical membrane-spanning segment. Over 238–329 (AQHQAEVAKM…GEFIKALMKE (92 aa)) the chain is Lumenal. The chain crosses the membrane as a helical span at residues 330–350 (IPALLHLPVLIIMALAILSFC). The Cytoplasmic segment spans residues 351 to 551 (YGAGKSVHVL…GQDPVSSPCG (201 aa)). The disordered stretch occupies residues 363-415 (IGGPESEPPQALRPRDRRRQEEIDYRPDGGAGDADFHYRGQMGPTEQGPYAKT). The span at 380–389 (RRQEEIDYRP) shows a compositional bias: basic and acidic residues. Residues serine 438 and serine 464 each carry the phosphoserine modification. The interval 447 to 551 (VPDAEAREHP…GQDPVSSPCG (105 aa)) is disordered. Threonine 482 carries the post-translational modification Phosphothreonine. Over residues 488 to 508 (TESSQSAKPVSGQDTSGNTEG) the composition is skewed to polar residues. Phosphoserine is present on residues serine 509, serine 524, and serine 532.

This sequence belongs to the chloride channel MCLC family. As to quaternary structure, homomultimers. Interacts with mitochondrial protein PIGBOS1 (via C-terminus); the interaction occurs at the mitochondria-associated endoplasmic reticulum (ER) membrane, a zone of contact between the ER and mitochondrial membranes, but does not appear to play a role in ER-mitochondria tethering and is not affected by ER stress. Interacts with CALR. As to expression, expressed in the retina of the eye, with extensive expression in the lamina cribrosa, optic nerve, ganglion cell layer, inner nuclear layer, outer nuclear layer and retinal pigment epithelium.

It localises to the endoplasmic reticulum membrane. The catalysed reaction is chloride(in) = chloride(out). It carries out the reaction bromide(in) = bromide(out). It catalyses the reaction nitrate(in) = nitrate(out). The enzyme catalyses fluoride(in) = fluoride(out). With respect to regulation, inhibited by ER lumenal Ca(2+). In terms of biological role, anion-selective channel with Ca(2+)-dependent and voltage-independent gating. Permeable to small monovalent anions with selectivity for bromide &gt; chloride &gt; nitrate &gt; fluoride. Operates in the endoplasmic reticulum (ER) membrane where it mediates chloride efflux to compensate for the loss of positive charges from the ER lumen upon Ca(2+) release. Contributes to the maintenance of ER Ca(2+) pools and activation of unfolded protein response to prevent accumulation of misfolded proteins in the ER lumen. Particularly involved in ER homeostasis mechanisms underlying motor neurons and retinal photoreceptors survival. This chain is Chloride channel CLIC-like protein 1, found in Homo sapiens (Human).